The primary structure comprises 526 residues: Peptide chain release factor 3 (526 aa).

Residues 9–277 enclose the tr-type G domain; the sequence is ERRRTFAIIS…AFAEYAPPPQ (269 aa). GTP contacts are provided by residues 18-25, 86-90, and 140-143; these read SHPDAGKT, DTPGH, and NKLD.

It belongs to the TRAFAC class translation factor GTPase superfamily. Classic translation factor GTPase family. PrfC subfamily.

It is found in the cytoplasm. Its function is as follows. Increases the formation of ribosomal termination complexes and stimulates activities of RF-1 and RF-2. It binds guanine nucleotides and has strong preference for UGA stop codons. It may interact directly with the ribosome. The stimulation of RF-1 and RF-2 is significantly reduced by GTP and GDP, but not by GMP. The chain is Peptide chain release factor 3 from Methylococcus capsulatus (strain ATCC 33009 / NCIMB 11132 / Bath).